A 449-amino-acid chain; its full sequence is Clusterin (449 aa).

The N-terminal stretch at 1–22 (MMKTLLLFVGLLLTWESGQVLG) is a signal peptide. A Nuclear localization signal motif is present at residues 78–81 (KKKK). Asn-86 carries N-linked (GlcNAc...) (complex) asparagine glycosylation. 5 cysteine pairs are disulfide-bonded: Cys-102-Cys-313, Cys-113-Cys-305, Cys-116-Cys-302, Cys-121-Cys-295, and Cys-129-Cys-285. Residue Asn-103 is glycosylated (N-linked (GlcNAc...) asparagine). The residue at position 133 (Ser-133) is a Phosphoserine. 3 N-linked (GlcNAc...) asparagine glycosylation sites follow: Asn-145, Asn-291, and Asn-354. Residue Asn-374 is glycosylated (N-linked (GlcNAc...) (complex) asparagine). The residue at position 396 (Ser-396) is a Phosphoserine. A Nuclear localization signal motif is present at residues 443-447 (RKKHR).

It belongs to the clusterin family. In terms of assembly, antiparallel disulfide-linked heterodimer of an alpha chain and a beta chain. Self-associates and forms higher oligomers. Interacts with a broad range of misfolded proteins, including APP, APOC2 and LYZ. Slightly acidic pH promotes interaction with misfolded proteins. Forms high-molecular weight oligomers upon interaction with misfolded proteins. Interacts with APOA1, LRP2, CLUAP1 and PON1. Interacts with the complement membrane attack complex. Interacts (via alpha chain) with XRCC6. Interacts with SYVN1, COMMD1, BTRC, CUL1 and with ubiquitin and SCF (SKP1-CUL1-F-box protein) E3 ubiquitin-protein ligase complexes. Interacts (via alpha chain) with BAX in stressed cells, where BAX undergoes a conformation change leading to association with the mitochondrial membrane. Does not interact with BAX in unstressed cells. Found in a complex with LTF, CLU, EPPIN and SEMG1. Interacts (immaturely glycosylated pre-secreted form) with HSPA5; this interaction promotes CLU stability and facilitates stress-induced CLU retrotranslocation from the secretory pathway to the mitochondria, thereby reducing stress-induced apoptosis by stabilizing mitochondrial membrane integrity. Interacts (isoform 4) with BCL2L1; this interaction releases and activates BAX and promotes cell death. Interacts with TGFBR2 and ACVR1. Interacts (secreted form) with STMN3; this interaction may act as an important modulator during neuronal differentiation. Interacts with VLDLR and LRP8. Proteolytically cleaved on its way through the secretory system, probably within the Golgi lumen. Proteolytic cleavage is not necessary for its chaperone activity. All non-secreted forms are not proteolytically cleaved. Chaperone activity of uncleaved forms is dependent on a non-reducing environment. Post-translationally, polyubiquitinated, leading to proteasomal degradation. Under cellular stress, the intracellular level of cleaved form is reduced due to proteasomal degradation. In terms of processing, extensively glycosylated with sulfated N-linked carbohydrates. About 30% of the protein mass is comprised of complex N-linked carbohydrate. Endoplasmic reticulum (ER) stress induces changes in glycosylation status and increases level of hypoglycosylated forms. Core carbohydrates are essential for chaperone activity. Non-secreted forms are hypoglycosylated or unglycosylated. As to expression, detected in blood plasma, cerebrospinal fluid, milk, seminal plasma and colon mucosa. Detected in the germinal center of colon lymphoid nodules and in colon parasympathetic ganglia of the Auerbach plexus (at protein level). Ubiquitous. Detected in brain, testis, ovary, liver and pancreas, and at lower levels in kidney, heart, spleen and lung.

Its subcellular location is the secreted. The protein localises to the cytoplasm. It localises to the nucleus. It is found in the mitochondrion membrane. The protein resides in the cytosol. Its subcellular location is the microsome. The protein localises to the endoplasmic reticulum. It localises to the mitochondrion. It is found in the perinuclear region. The protein resides in the cytoplasmic vesicle. Its subcellular location is the secretory vesicle. The protein localises to the chromaffin granule. In terms of biological role, functions as extracellular chaperone that prevents aggregation of non native proteins. Prevents stress-induced aggregation of blood plasma proteins. Inhibits formation of amyloid fibrils by APP, APOC2, B2M, CALCA, CSN3, SNCA and aggregation-prone LYZ variants (in vitro). Does not require ATP. Maintains partially unfolded proteins in a state appropriate for subsequent refolding by other chaperones, such as HSPA8/HSC70. Does not refold proteins by itself. Binding to cell surface receptors triggers internalization of the chaperone-client complex and subsequent lysosomal or proteasomal degradation. Protects cells against apoptosis and against cytolysis by complement: inhibits assembly of the complement membrane attack complex (MAC) by preventing polymerization of C9 pore component of the MAC complex. Intracellular forms interact with ubiquitin and SCF (SKP1-CUL1-F-box protein) E3 ubiquitin-protein ligase complexes and promote the ubiquitination and subsequent proteasomal degradation of target proteins. Promotes proteasomal degradation of COMMD1 and IKBKB. Modulates NF-kappa-B transcriptional activity. A mitochondrial form suppresses BAX-dependent release of cytochrome c into the cytoplasm and inhibit apoptosis. Plays a role in the regulation of cell proliferation. An intracellular form suppresses stress-induced apoptosis by stabilizing mitochondrial membrane integrity through interaction with HSPA5. Secreted form does not affect caspase or BAX-mediated intrinsic apoptosis and TNF-induced NF-kappa-B-activity. Secreted form act as an important modulator during neuronal differentiation through interaction with STMN3. Plays a role in the clearance of immune complexes that arise during cell injury. Does not affect caspase or BAX-mediated intrinsic apoptosis and TNF-induced NF-kappa-B-activity. Its function is as follows. Does not affect caspase or BAX-mediated intrinsic apoptosis and TNF-induced NF-kappa-B-activity. Promotes cell death through interaction with BCL2L1 that releases and activates BAX. In Homo sapiens (Human), this protein is Clusterin.